Here is a 359-residue protein sequence, read N- to C-terminus: Probable dual-specificity RNA methyltransferase RlmN (359 aa).

The Proton acceptor role is filled by glutamate 91. The Radical SAM core domain maps to 97–329 (QHYGHSVCVT…KKNGVNCVVR (233 aa)). Cysteine 104 and cysteine 340 are oxidised to a cystine. Residues cysteine 111, cysteine 115, and cysteine 118 each coordinate [4Fe-4S] cluster. S-adenosyl-L-methionine contacts are provided by residues 163–164 (GE), serine 195, 218–220 (SLH), and asparagine 296. Cysteine 340 (S-methylcysteine intermediate) is an active-site residue.

Belongs to the radical SAM superfamily. RlmN family. The cofactor is [4Fe-4S] cluster.

Its subcellular location is the cytoplasm. The catalysed reaction is adenosine(2503) in 23S rRNA + 2 reduced [2Fe-2S]-[ferredoxin] + 2 S-adenosyl-L-methionine = 2-methyladenosine(2503) in 23S rRNA + 5'-deoxyadenosine + L-methionine + 2 oxidized [2Fe-2S]-[ferredoxin] + S-adenosyl-L-homocysteine. It catalyses the reaction adenosine(37) in tRNA + 2 reduced [2Fe-2S]-[ferredoxin] + 2 S-adenosyl-L-methionine = 2-methyladenosine(37) in tRNA + 5'-deoxyadenosine + L-methionine + 2 oxidized [2Fe-2S]-[ferredoxin] + S-adenosyl-L-homocysteine. Specifically methylates position 2 of adenine 2503 in 23S rRNA and position 2 of adenine 37 in tRNAs. This is Probable dual-specificity RNA methyltransferase RlmN from Streptococcus pyogenes serotype M18 (strain MGAS8232).